The chain runs to 67 residues: Large ribosomal subunit protein bL35 (67 aa).

Belongs to the bacterial ribosomal protein bL35 family.

The protein is Large ribosomal subunit protein bL35 of Zymomonas mobilis subsp. mobilis (strain ATCC 31821 / ZM4 / CP4).